The following is a 95-amino-acid chain: Aspartyl/glutamyl-tRNA(Asn/Gln) amidotransferase subunit C (95 aa).

This sequence belongs to the GatC family. Heterotrimer of A, B and C subunits.

The catalysed reaction is L-glutamyl-tRNA(Gln) + L-glutamine + ATP + H2O = L-glutaminyl-tRNA(Gln) + L-glutamate + ADP + phosphate + H(+). It carries out the reaction L-aspartyl-tRNA(Asn) + L-glutamine + ATP + H2O = L-asparaginyl-tRNA(Asn) + L-glutamate + ADP + phosphate + 2 H(+). Allows the formation of correctly charged Asn-tRNA(Asn) or Gln-tRNA(Gln) through the transamidation of misacylated Asp-tRNA(Asn) or Glu-tRNA(Gln) in organisms which lack either or both of asparaginyl-tRNA or glutaminyl-tRNA synthetases. The reaction takes place in the presence of glutamine and ATP through an activated phospho-Asp-tRNA(Asn) or phospho-Glu-tRNA(Gln). This is Aspartyl/glutamyl-tRNA(Asn/Gln) amidotransferase subunit C from Brucella anthropi (strain ATCC 49188 / DSM 6882 / CCUG 24695 / JCM 21032 / LMG 3331 / NBRC 15819 / NCTC 12168 / Alc 37) (Ochrobactrum anthropi).